The sequence spans 217 residues: 3,4-dihydroxy-2-butanone 4-phosphate synthase (217 aa).

D-ribulose 5-phosphate-binding positions include 37–38 (RE), Asp42, 150–154 (RRGHT), and Glu174. Glu38 lines the Mg(2+) pocket. A Mg(2+)-binding site is contributed by His153.

The protein belongs to the DHBP synthase family. In terms of assembly, homodimer. The cofactor is Mg(2+). Mn(2+) is required as a cofactor.

It catalyses the reaction D-ribulose 5-phosphate = (2S)-2-hydroxy-3-oxobutyl phosphate + formate + H(+). It participates in cofactor biosynthesis; riboflavin biosynthesis; 2-hydroxy-3-oxobutyl phosphate from D-ribulose 5-phosphate: step 1/1. Its function is as follows. Catalyzes the conversion of D-ribulose 5-phosphate to formate and 3,4-dihydroxy-2-butanone 4-phosphate. The chain is 3,4-dihydroxy-2-butanone 4-phosphate synthase from Yersinia pseudotuberculosis serotype O:1b (strain IP 31758).